The sequence spans 430 residues: Serine hydroxymethyltransferase (430 aa).

(6S)-5,6,7,8-tetrahydrofolate is bound by residues Leu126 and 130 to 132 (GHL). Lys235 bears the N6-(pyridoxal phosphate)lysine mark.

The protein belongs to the SHMT family. Homodimer. The cofactor is pyridoxal 5'-phosphate.

It is found in the cytoplasm. The enzyme catalyses (6R)-5,10-methylene-5,6,7,8-tetrahydrofolate + glycine + H2O = (6S)-5,6,7,8-tetrahydrofolate + L-serine. It participates in one-carbon metabolism; tetrahydrofolate interconversion. It functions in the pathway amino-acid biosynthesis; glycine biosynthesis; glycine from L-serine: step 1/1. In terms of biological role, catalyzes the reversible interconversion of serine and glycine with tetrahydrofolate (THF) serving as the one-carbon carrier. This reaction serves as the major source of one-carbon groups required for the biosynthesis of purines, thymidylate, methionine, and other important biomolecules. Also exhibits THF-independent aldolase activity toward beta-hydroxyamino acids, producing glycine and aldehydes, via a retro-aldol mechanism. The sequence is that of Serine hydroxymethyltransferase from Leifsonia xyli subsp. xyli (strain CTCB07).